The chain runs to 274 residues: Formamidopyrimidine-DNA glycosylase (274 aa).

The Schiff-base intermediate with DNA role is filled by proline 2. Glutamate 3 acts as the Proton donor in catalysis. Lysine 57 acts as the Proton donor; for beta-elimination activity in catalysis. Histidine 92, arginine 111, and lysine 152 together coordinate DNA. The FPG-type zinc-finger motif lies at 237–271 (QVYGRKGEECNDCGSIIEAKVIGQRNSFYCPKCQR). The active-site Proton donor; for delta-elimination activity is arginine 261.

The protein belongs to the FPG family. In terms of assembly, monomer. Requires Zn(2+) as cofactor.

The catalysed reaction is Hydrolysis of DNA containing ring-opened 7-methylguanine residues, releasing 2,6-diamino-4-hydroxy-5-(N-methyl)formamidopyrimidine.. It catalyses the reaction 2'-deoxyribonucleotide-(2'-deoxyribose 5'-phosphate)-2'-deoxyribonucleotide-DNA = a 3'-end 2'-deoxyribonucleotide-(2,3-dehydro-2,3-deoxyribose 5'-phosphate)-DNA + a 5'-end 5'-phospho-2'-deoxyribonucleoside-DNA + H(+). Involved in base excision repair of DNA damaged by oxidation or by mutagenic agents. Acts as a DNA glycosylase that recognizes and removes damaged bases. Has a preference for oxidized purines, such as 7,8-dihydro-8-oxoguanine (8-oxoG). Has AP (apurinic/apyrimidinic) lyase activity and introduces nicks in the DNA strand. Cleaves the DNA backbone by beta-delta elimination to generate a single-strand break at the site of the removed base with both 3'- and 5'-phosphates. This is Formamidopyrimidine-DNA glycosylase from Glaesserella parasuis serovar 5 (strain SH0165) (Haemophilus parasuis).